The primary structure comprises 294 residues: Protein RarD (294 aa).

Topologically, residues 1 to 11 are cytoplasmic; the sequence is MDAKQTRQGVL. Residues 12–34 form a helical membrane-spanning segment; sequence LALAAYFIWGIAPAYFKLIYYVP. One can recognise an EamA domain in the interval 18–145; sequence FIWGIAPAYF…AVCGVLVQLW (128 aa). Residues 35-37 lie on the Periplasmic side of the membrane; that stretch reads ADE. Residues 38–60 form a helical membrane-spanning segment; sequence ILTHRVIWSFFFMVALLSVSRQW. Residues 61–72 lie on the Cytoplasmic side of the membrane; that stretch reads RQVKRLLKTPKK. A helical transmembrane segment spans residues 73 to 95; that stretch reads IFLLALSAVLVGGNWLLFIWAVN. The Periplasmic portion of the chain corresponds to 96–99; that stretch reads NHHM. A helical transmembrane segment spans residues 100–122; it reads LEASLGYFINPLVNILLGMIFLG. Residues 123 to 128 lie on the Cytoplasmic side of the membrane; that stretch reads ERFRRM. A helical membrane pass occupies residues 129 to 146; sequence QWLAVILAVCGVLVQLWT. Topologically, residues 147-149 are periplasmic; it reads FGS. Residues 150 to 167 traverse the membrane as a helical segment; it reads LPIIALGLAFSFAFYGLV. Residues 168 to 179 lie on the Cytoplasmic side of the membrane; sequence RKKIAVEAQTGM. Residues 180 to 197 form a helical membrane-spanning segment; the sequence is LVETLWLLPVAAIYLFSI. Residues 198-211 are Periplasmic-facing; it reads ADSATSHMGQNALS. The chain crosses the membrane as a helical span at residues 212–234; that stretch reads LNLLLMAAGVVTTIPLLCFTGAA. Topologically, residues 235 to 238 are cytoplasmic; it reads TRLR. A helical transmembrane segment spans residues 239–261; that stretch reads LSTLGFFQYIGPTLMFLLAVTFY. Over 262 to 270 the chain is Periplasmic; the sequence is GEVPGADKM. A helical membrane pass occupies residues 271–290; that stretch reads VTFAFIWVALAIFVMDAIYT. The Cytoplasmic segment spans residues 291-294; sequence QRKK.

The protein belongs to the EamA transporter family.

The protein localises to the cell inner membrane. The polypeptide is Protein RarD (rarD) (Salmonella typhi).